The following is a 313-amino-acid chain: Ribosomal RNA small subunit methyltransferase H (313 aa).

S-adenosyl-L-methionine contacts are provided by residues 35–37, aspartate 55, phenylalanine 79, aspartate 101, and glutamine 108; that span reads GGH.

Belongs to the methyltransferase superfamily. RsmH family.

The protein resides in the cytoplasm. The catalysed reaction is cytidine(1402) in 16S rRNA + S-adenosyl-L-methionine = N(4)-methylcytidine(1402) in 16S rRNA + S-adenosyl-L-homocysteine + H(+). Its function is as follows. Specifically methylates the N4 position of cytidine in position 1402 (C1402) of 16S rRNA. The polypeptide is Ribosomal RNA small subunit methyltransferase H (Klebsiella pneumoniae (strain 342)).